A 493-amino-acid chain; its full sequence is Cysteine sulfinic acid decarboxylase (493 aa).

The residue at position 305 (Lys-305) is an N6-(pyridoxal phosphate)lysine.

It belongs to the group II decarboxylase family. In terms of assembly, homodimer. Pyridoxal 5'-phosphate serves as cofactor. In terms of tissue distribution, expressed in liver and brain. Also expressed in both astrocytes and neurons, but lower levels are expressed in astrocytes.

It catalyses the reaction L-aspartate + H(+) = beta-alanine + CO2. It carries out the reaction 3-sulfino-L-alanine + H(+) = hypotaurine + CO2. The catalysed reaction is L-cysteate + H(+) = taurine + CO2. The protein operates within organosulfur biosynthesis; taurine biosynthesis; hypotaurine from L-cysteine: step 2/2. Catalyzes the decarboxylation of L-aspartate, 3-sulfino-L-alanine (cysteine sulfinic acid), and L-cysteate to beta-alanine, hypotaurine and taurine, respectively. The preferred substrate is 3-sulfino-L-alanine. Does not exhibit any decarboxylation activity toward glutamate. In Homo sapiens (Human), this protein is Cysteine sulfinic acid decarboxylase (CSAD).